The chain runs to 266 residues: 3-methyl-2-oxobutanoate hydroxymethyltransferase (266 aa).

Residues D45 and D84 each contribute to the Mg(2+) site. Residues 45–46 (DS), D84, and K112 each bind 3-methyl-2-oxobutanoate. E114 contributes to the Mg(2+) binding site. E181 serves as the catalytic Proton acceptor.

The protein belongs to the PanB family. Homodecamer; pentamer of dimers. The cofactor is Mg(2+).

It is found in the cytoplasm. It catalyses the reaction 3-methyl-2-oxobutanoate + (6R)-5,10-methylene-5,6,7,8-tetrahydrofolate + H2O = 2-dehydropantoate + (6S)-5,6,7,8-tetrahydrofolate. It functions in the pathway cofactor biosynthesis; (R)-pantothenate biosynthesis; (R)-pantoate from 3-methyl-2-oxobutanoate: step 1/2. In terms of biological role, catalyzes the reversible reaction in which hydroxymethyl group from 5,10-methylenetetrahydrofolate is transferred onto alpha-ketoisovalerate to form ketopantoate. The sequence is that of 3-methyl-2-oxobutanoate hydroxymethyltransferase from Pseudomonas fluorescens (strain Pf0-1).